Consider the following 102-residue polypeptide: Chorion protein S15 (102 aa).

The N-terminal stretch at 1–18 (MKFLIAFVAIAFFACVSA) is a signal peptide.

The protein belongs to the chorion protein S15/S18 family.

The protein localises to the secreted. In terms of biological role, chorion membrane (egg shell) protein; plays a role in protecting the egg from the environment. This chain is Chorion protein S15 (Cp15), found in Drosophila grimshawi (Hawaiian fruit fly).